A 213-amino-acid chain; its full sequence is Histone H1.3 (213 aa).

Ser1 carries the post-translational modification N-acetylserine. Over residues 1 to 15 the composition is skewed to low complexity; that stretch reads SEAPAETAAPAPAEK. Positions 1–41 are disordered; it reads SEAPAETAAPAPAEKSPAKKKKAAKKPGAGAAKRKAAGPPV. N6-acetyllysine is present on Lys15. N6-(beta-hydroxybutyryl)lysine occurs at positions 35 and 53. The region spanning 37–110 is the H15 domain; that stretch reads AGPPVSELIT…GASGSFKLDK (74 aa). Residue Arg55 is modified to Citrulline. N6-(beta-hydroxybutyryl)lysine occurs at positions 65, 86, and 91. The segment at 92 to 213 is disordered; it reads GTLVETKGTG…AKKTAAKKKK (122 aa). At Ser105 the chain carries Phosphoserine. Residue Lys107 is modified to N6-(beta-hydroxybutyryl)lysine. The segment covering 107–119 has biased composition (basic and acidic residues); it reads KLDKKAASGEAKP. Composition is skewed to basic residues over residues 120–131, 138–170, and 179–213; these read KPKKAGAAKPKK, KKPK…KVAK, and KSPK…KKKK.

This sequence belongs to the histone H1/H5 family. Post-translationally, H1 histones are progressively phosphorylated during the cell cycle, becoming maximally phosphorylated during late G2 phase and M phase, and being dephosphorylated sharply thereafter. In terms of processing, citrullination at Arg-55 (H1R54ci) by PADI4 takes place within the DNA-binding site of H1 and results in its displacement from chromatin and global chromatin decondensation, thereby promoting pluripotency and stem cell maintenance.

The protein resides in the nucleus. It is found in the chromosome. Functionally, histones H1 are necessary for the condensation of nucleosome chains into higher-order structures. The sequence is that of Histone H1.3 from Oryctolagus cuniculus (Rabbit).